The primary structure comprises 576 residues: (+)-alpha-terpineol synthase (576 aa).

Residues R286, D323, D327, R466, and N469 each contribute to the (2E)-geranyl diphosphate site. Positions 323 and 327 each coordinate Mg(2+). The DDXXD motif signature appears at 323-327 (DDVYD). Mg(2+)-binding residues include N469, T473, and E477.

The protein belongs to the terpene synthase family. Tpsb subfamily. Mg(2+) is required as a cofactor. The cofactor is Mn(2+).

It catalyses the reaction (2E)-geranyl diphosphate + H2O = (R)-alpha-terpineol + diphosphate. Its function is as follows. Monoterpene synthase producing mainly (+)-alpha-terpineol (44%) and (-)-limonene (33.6%) and lower amounts of (E)-geraniol (5.9%), linalool (5.0%), myrcene (3.4%), (-)-alpha-pinene (3.3%), (+)-sabinene (3.0%) and alpha-terpinolene (1.6%). In Santalum album (White sandalwood), this protein is (+)-alpha-terpineol synthase.